The sequence spans 428 residues: Gamma-glutamyl phosphate reductase (428 aa).

Belongs to the gamma-glutamyl phosphate reductase family.

It is found in the cytoplasm. The catalysed reaction is L-glutamate 5-semialdehyde + phosphate + NADP(+) = L-glutamyl 5-phosphate + NADPH + H(+). Its pathway is amino-acid biosynthesis; L-proline biosynthesis; L-glutamate 5-semialdehyde from L-glutamate: step 2/2. In terms of biological role, catalyzes the NADPH-dependent reduction of L-glutamate 5-phosphate into L-glutamate 5-semialdehyde and phosphate. The product spontaneously undergoes cyclization to form 1-pyrroline-5-carboxylate. This is Gamma-glutamyl phosphate reductase from Streptomyces avermitilis (strain ATCC 31267 / DSM 46492 / JCM 5070 / NBRC 14893 / NCIMB 12804 / NRRL 8165 / MA-4680).